The chain runs to 317 residues: Transaldolase (317 aa).

The active-site Schiff-base intermediate with substrate is the K132.

Belongs to the transaldolase family. Type 1 subfamily. In terms of assembly, homodimer.

The protein resides in the cytoplasm. The enzyme catalyses D-sedoheptulose 7-phosphate + D-glyceraldehyde 3-phosphate = D-erythrose 4-phosphate + beta-D-fructose 6-phosphate. The protein operates within carbohydrate degradation; pentose phosphate pathway; D-glyceraldehyde 3-phosphate and beta-D-fructose 6-phosphate from D-ribose 5-phosphate and D-xylulose 5-phosphate (non-oxidative stage): step 2/3. Its function is as follows. Transaldolase is important for the balance of metabolites in the pentose-phosphate pathway. The chain is Transaldolase from Shewanella frigidimarina (strain NCIMB 400).